The following is a 379-amino-acid chain: Carbamoyl phosphate synthase small chain (379 aa).

Positions methionine 1–glutamate 189 are CPSase. Positions 47, 241, and 243 each coordinate L-glutamine. In terms of domain architecture, Glutamine amidotransferase type-1 spans histidine 193 to alanine 379. Cysteine 269 (nucleophile) is an active-site residue. The L-glutamine site is built by leucine 270, glutamine 273, asparagine 311, glycine 313, and phenylalanine 314. Residues histidine 353 and glutamate 355 contribute to the active site.

The protein belongs to the CarA family. Composed of two chains; the small (or glutamine) chain promotes the hydrolysis of glutamine to ammonia, which is used by the large (or ammonia) chain to synthesize carbamoyl phosphate. Tetramer of heterodimers (alpha,beta)4.

It catalyses the reaction hydrogencarbonate + L-glutamine + 2 ATP + H2O = carbamoyl phosphate + L-glutamate + 2 ADP + phosphate + 2 H(+). It carries out the reaction L-glutamine + H2O = L-glutamate + NH4(+). The protein operates within amino-acid biosynthesis; L-arginine biosynthesis; carbamoyl phosphate from bicarbonate: step 1/1. It functions in the pathway pyrimidine metabolism; UMP biosynthesis via de novo pathway; (S)-dihydroorotate from bicarbonate: step 1/3. Small subunit of the glutamine-dependent carbamoyl phosphate synthetase (CPSase). CPSase catalyzes the formation of carbamoyl phosphate from the ammonia moiety of glutamine, carbonate, and phosphate donated by ATP, constituting the first step of 2 biosynthetic pathways, one leading to arginine and/or urea and the other to pyrimidine nucleotides. The small subunit (glutamine amidotransferase) binds and cleaves glutamine to supply the large subunit with the substrate ammonia. The polypeptide is Carbamoyl phosphate synthase small chain (Vibrio vulnificus (strain YJ016)).